Consider the following 237-residue polypeptide: Phosphatidylserine decarboxylase proenzyme (237 aa).

The active-site Schiff-base intermediate with substrate; via pyruvic acid is Ser-206. Ser-206 carries the pyruvic acid (Ser); by autocatalysis modification.

This sequence belongs to the phosphatidylserine decarboxylase family. PSD-A subfamily. As to quaternary structure, heterodimer of a large membrane-associated beta subunit and a small pyruvoyl-containing alpha subunit. Requires pyruvate as cofactor. Is synthesized initially as an inactive proenzyme. Formation of the active enzyme involves a self-maturation process in which the active site pyruvoyl group is generated from an internal serine residue via an autocatalytic post-translational modification. Two non-identical subunits are generated from the proenzyme in this reaction, and the pyruvate is formed at the N-terminus of the alpha chain, which is derived from the carboxyl end of the proenzyme. The post-translation cleavage follows an unusual pathway, termed non-hydrolytic serinolysis, in which the side chain hydroxyl group of the serine supplies its oxygen atom to form the C-terminus of the beta chain, while the remainder of the serine residue undergoes an oxidative deamination to produce ammonia and the pyruvoyl prosthetic group on the alpha chain.

It is found in the cell membrane. It catalyses the reaction a 1,2-diacyl-sn-glycero-3-phospho-L-serine + H(+) = a 1,2-diacyl-sn-glycero-3-phosphoethanolamine + CO2. It functions in the pathway phospholipid metabolism; phosphatidylethanolamine biosynthesis; phosphatidylethanolamine from CDP-diacylglycerol: step 2/2. Catalyzes the formation of phosphatidylethanolamine (PtdEtn) from phosphatidylserine (PtdSer). This is Phosphatidylserine decarboxylase proenzyme from Rhodococcus jostii (strain RHA1).